Consider the following 609-residue polypeptide: Protein NRT1/ PTR FAMILY 7.1 (609 aa).

2 helical membrane passes run 67 to 87 (IILL…GVNL) and 109 to 129 (WTGT…SYWG). A Phosphothreonine modification is found at T133. 10 consecutive transmembrane segments (helical) span residues 136-156 (IFQV…WFFL), 173-193 (SSLG…GYGG), 216-236 (FFSY…TILV), 243-263 (LWTE…VAFL), 367-387 (PIWL…SLFV), 402-422 (IPAA…TGIY), 438-458 (MGIG…TEIQ), 474-494 (ILWQ…MYVG), 516-536 (MASM…VMAI), and 559-579 (FYFL…IFAK).

Belongs to the major facilitator superfamily. Proton-dependent oligopeptide transporter (POT/PTR) (TC 2.A.17) family. As to expression, expressed in flowers.

The protein localises to the membrane. The protein is Protein NRT1/ PTR FAMILY 7.1 (NPF7.1) of Arabidopsis thaliana (Mouse-ear cress).